A 314-amino-acid chain; its full sequence is Jacalin-related lectin 9 (314 aa).

Positions 1–23 (MIFIYIFLFLSSAIIDSNGFAMA) are cleaved as a signal peptide. Jacalin-type lectin domains follow at residues 24-165 (QKLE…YLTK) and 168-313 (PTKS…YFSP).

The protein belongs to the jacalin lectin family.

The polypeptide is Jacalin-related lectin 9 (JAL9) (Arabidopsis thaliana (Mouse-ear cress)).